A 357-amino-acid chain; its full sequence is O-methyltransferase 9 (357 aa).

Residues Gly200, Asp224, Asn249, Phe250, and Lys263 each contribute to the S-adenosyl-L-methionine site. His267 (proton acceptor) is an active-site residue.

Belongs to the class I-like SAM-binding methyltransferase superfamily. Cation-independent O-methyltransferase family. COMT subfamily.

It carries out the reaction (3,5-dichloro-2,4,6-trihydroxyphenyl)hexan-1-one + S-adenosyl-L-methionine = 1-(3,5-dichloro-2,6-dihydroxy-4-methoxyphenyl)hexan-1-one + S-adenosyl-L-homocysteine + H(+). The protein is O-methyltransferase 9 (omt9) of Dictyostelium discoideum (Social amoeba).